Reading from the N-terminus, the 289-residue chain is Splicing factor C9orf78 homolog (289 aa).

Positions 1-12 (MPVVRKIFRRRR) are enriched in basic residues. Disordered stretches follow at residues 1-27 (MPVV…SEEV) and 86-109 (GKDK…TNRR). Residues 5–58 (RKIFRRRRGDSESEEDEQDSEEVRLKLEETREVQNLRKRPNGVSAVALLVGEKV) are interaction with SNRNP200. A phosphoserine mark is found at serine 15 and serine 17. Residue tyrosine 147 is modified to Phosphotyrosine. Over residues 232-283 (LNAPIRRNKEEPKARPLRVGDTEKPEPERSPPNRKRPANEKATDDYHYEKFK) the composition is skewed to basic and acidic residues. The interval 232–289 (LNAPIRRNKEEPKARPLRVGDTEKPEPERSPPNRKRPANEKATDDYHYEKFKKMNRRY) is disordered. A Phosphothreonine modification is found at threonine 253. Serine 261 is subject to Phosphoserine.

Belongs to the TLS1 family. In terms of assembly, component of the spliceosome. Interacts with SNRNP200; the interaction is direct. Interacts with PRPF8.

Its subcellular location is the nucleus. The protein localises to the chromosome. The protein resides in the centromere. Its function is as follows. Plays a role in pre-mRNA splicing by promoting usage of the upstream 3'-splice site at alternative NAGNAG splice sites; these are sites featuring alternative acceptor motifs separated by only a few nucleotides. May also modulate exon inclusion events. Plays a role in spliceosomal remodeling by displacing WBP4 from SNRNP200 and may act to inhibit SNRNP200 helicase activity. Binds U5 snRNA. Required for proper chromosome segregation. Not required for splicing of shelterin components. This chain is Splicing factor C9orf78 homolog, found in Pongo abelii (Sumatran orangutan).